The following is a 215-amino-acid chain: tRNA (guanine-N(7)-)-methyltransferase (215 aa).

4 residues coordinate S-adenosyl-L-methionine: E44, E69, D96, and D118. The active site involves D118. Substrate contacts are provided by residues K122, D154, and 191-194 (TEYE).

Belongs to the class I-like SAM-binding methyltransferase superfamily. TrmB family.

The enzyme catalyses guanosine(46) in tRNA + S-adenosyl-L-methionine = N(7)-methylguanosine(46) in tRNA + S-adenosyl-L-homocysteine. The protein operates within tRNA modification; N(7)-methylguanine-tRNA biosynthesis. In terms of biological role, catalyzes the formation of N(7)-methylguanine at position 46 (m7G46) in tRNA. The chain is tRNA (guanine-N(7)-)-methyltransferase from Exiguobacterium sp. (strain ATCC BAA-1283 / AT1b).